The sequence spans 309 residues: MPTASMTPNPFLSGSPEHAAAAGPLAAFAALPTGMQLAFAIVLGLVVGSFLNVVVHRLPIMMKRAWLAEIAEATGAPCADDSLPARYNLCVPRSACPHCGHALRAWENVPVLSYIALRGRCRHCRTPIGARYPLIELASGALAAGALALFGPSGAALAAFGLCAALLAMSAIDMQTGFLPDSLTLPLLWAGLCVNLWGTFASLRAAVIGAIAGYLFLWCILWLFKLLRGIEGIGYGDLKLLAALGAWLGWEALPQVVLIAAVAGAAVGLVATWRGRMRFEEPLPFGPFLAAGGAATLFFGTPFYLLLGG.

The helical transmembrane segment at Met-35 to Val-55 threads the bilayer. Zn(2+) is bound by residues Cys-96, Cys-99, Cys-121, and Cys-124. 6 consecutive transmembrane segments (helical) span residues Leu-147 to Leu-167, Leu-183 to Leu-203, Val-207 to Leu-227, Ile-230 to Trp-250, Leu-253 to Trp-273, and Phe-288 to Gly-308.

It belongs to the peptidase A24 family. Requires Zn(2+) as cofactor.

The protein localises to the cell inner membrane. It catalyses the reaction Typically cleaves a -Gly-|-Phe- bond to release an N-terminal, basic peptide of 5-8 residues from type IV prepilin, and then N-methylates the new N-terminal amino group, the methyl donor being S-adenosyl-L-methionine.. Its function is as follows. Plays an essential role in type IV pili and type II pseudopili formation by proteolytically removing the leader sequence from substrate proteins and subsequently monomethylating the alpha-amino group of the newly exposed N-terminal phenylalanine. The chain is Prepilin leader peptidase/N-methyltransferase (gspO) from Burkholderia pseudomallei (strain 1026b).